Consider the following 829-residue polypeptide: DNA ligase (829 aa).

A disordered region spans residues 1 to 23 (MPAQTSRARPVEEMTAAQAREAH). NAD(+) contacts are provided by residues 47-51 (DAEYD), 96-97 (SL), and Glu-130. Lys-132 (N6-AMP-lysine intermediate) is an active-site residue. Residues Arg-153, Glu-190, Lys-306, and Lys-330 each contribute to the NAD(+) site. Zn(2+) is bound by residues Cys-453, Cys-456, Cys-477, and Cys-483. A BRCT domain is found at 750 to 829 (AAAAVFSGQT…AEWLAMVEAA (80 aa)).

Belongs to the NAD-dependent DNA ligase family. LigA subfamily. Requires Mg(2+) as cofactor. The cofactor is Mn(2+).

It carries out the reaction NAD(+) + (deoxyribonucleotide)n-3'-hydroxyl + 5'-phospho-(deoxyribonucleotide)m = (deoxyribonucleotide)n+m + AMP + beta-nicotinamide D-nucleotide.. Its function is as follows. DNA ligase that catalyzes the formation of phosphodiester linkages between 5'-phosphoryl and 3'-hydroxyl groups in double-stranded DNA using NAD as a coenzyme and as the energy source for the reaction. It is essential for DNA replication and repair of damaged DNA. The sequence is that of DNA ligase from Methylobacterium nodulans (strain LMG 21967 / CNCM I-2342 / ORS 2060).